The primary structure comprises 261 residues: Carbonic anhydrase 1 (261 aa).

Ala-2 is modified (N-acetylalanine). The 258-residue stretch at 4–261 folds into the Alpha-carbonic anhydrase domain; the sequence is PDWGYDDKNG…LKGRTVRASF (258 aa). The active-site Proton donor/acceptor is His-65. Residues His-95, His-97, and His-120 each coordinate Zn(2+). Residues Thr-200 and 200 to 201 contribute to the substrate site; that span reads TH. The tract at residues 235–261 is disordered; sequence EGDNPVPSQRNNRPTQPLKGRTVRASF. Polar residues predominate over residues 240–249; it reads VPSQRNNRPT.

It belongs to the alpha-carbonic anhydrase family. The cofactor is Zn(2+).

It is found in the cytoplasm. It carries out the reaction hydrogencarbonate + H(+) = CO2 + H2O. It catalyses the reaction urea = cyanamide + H2O. With respect to regulation, inhibited by acetazolamide. In terms of biological role, catalyzes the reversible hydration of carbon dioxide. Can hydrate cyanamide to urea. In Macaca nemestrina (Pig-tailed macaque), this protein is Carbonic anhydrase 1 (CA1).